We begin with the raw amino-acid sequence, 505 residues long: UDP-N-acetylmuramyl-tripeptide synthetase (505 aa).

Serine 35 serves as a coordination point for UDP-N-acetyl-alpha-D-muramoyl-L-alanyl-D-glutamate. Residue 118–124 (GTDGKSS) coordinates ATP. Residues 163 to 164 (ST), threonine 190, and arginine 200 contribute to the UDP-N-acetyl-alpha-D-muramoyl-L-alanyl-D-glutamate site. An N6-carboxylysine modification is found at lysine 232.

The protein belongs to the MurCDEF family. MurE subfamily. Post-translationally, carboxylation is probably crucial for Mg(2+) binding and, consequently, for the gamma-phosphate positioning of ATP.

It localises to the cytoplasm. Its pathway is cell wall biogenesis; peptidoglycan biosynthesis. Catalyzes the addition of an amino acid to the nucleotide precursor UDP-N-acetylmuramoyl-L-alanyl-D-glutamate (UMAG) in the biosynthesis of bacterial cell-wall peptidoglycan. This is UDP-N-acetylmuramyl-tripeptide synthetase from Borreliella afzelii (strain PKo) (Borrelia afzelii).